Here is a 184-residue protein sequence, read N- to C-terminus: MKAGLTRRQVLDRTEKRAFVEFLADVFGSTSMVVVTQNKGLTVADVTELRRRIRAAGATYKVAKNRLASRALDGTQFDGIAPLLKGPTALAWSEDPASVAKVIVEFAKTNDKLVVLGGALGSQALGVDGIKALAELPSLDELRAKLVGMINTPATRIAGVVQAPAGQLARVFGAYAKAGEAEAA.

Belongs to the universal ribosomal protein uL10 family. In terms of assembly, part of the ribosomal stalk of the 50S ribosomal subunit. The N-terminus interacts with L11 and the large rRNA to form the base of the stalk. The C-terminus forms an elongated spine to which L12 dimers bind in a sequential fashion forming a multimeric L10(L12)X complex.

In terms of biological role, forms part of the ribosomal stalk, playing a central role in the interaction of the ribosome with GTP-bound translation factors. The chain is Large ribosomal subunit protein uL10 from Gluconobacter oxydans (strain 621H) (Gluconobacter suboxydans).